The primary structure comprises 744 residues: Collagen alpha-1(VIII) chain (744 aa).

The N-terminal stretch at 1 to 27 is a signal peptide; sequence MAVQPGPPQLLQVLLTISLGSIRLIQA. The tract at residues 29–117 is nonhelical region (NC2); sequence AYYGIKPLPP…GKEIPLASLR (89 aa). A compositionally biased stretch (basic and acidic residues) spans 101-110; sequence KEAVPKKGKE. Disordered regions lie at residues 101–434 and 463–584; these read KEAV…PGLQ and EAGH…QGEY. The interval 118-571 is triple-helical region; the sequence is GEQGPRGEPG…PGPPGPPGPP (454 aa). The span at 128–137 shows a compositional bias: pro residues; that stretch reads PRGPPGPPGL. Positions 168–190 are enriched in low complexity; it reads KPGAMGMPGAKGEIGPKGEIGPM. Gly residues predominate over residues 203–217; the sequence is GLPGIGKPGGPGLPG. Residues 288–298 are compositionally biased toward pro residues; that stretch reads KPGPPGEPGPQ. Gly residues predominate over residues 328-337; sequence GFPGGKGEQG. The span at 389 to 403 shows a compositional bias: pro residues; it reads PGEPGLPGIPGPMGP. Residues 411–420 show a composition bias toward gly residues; sequence GPKGEGGIVG. 2 stretches are compositionally biased toward low complexity: residues 469 to 506 and 540 to 556; these read LPGL…TGPS and LHGP…QGQP. Residues 558 to 579 show a composition bias toward pro residues; sequence LPGPPGPPGPPGPPAVMPPTPA. Residues 572-744 form a nonhelical region (NC1) region; sequence AVMPPTPAPQ…SFSGYLLYPM (173 aa). The C1q domain occupies 611–744; that stretch reads PAYEMPAFTA…SFSGYLLYPM (134 aa).

In terms of assembly, homotrimers, or heterotrimers in association with alpha 2(VIII) type collagens. Four homotrimers can form a tetrahedron stabilized by central interacting C-terminal NC1 trimers. Prolines at the third position of the tripeptide repeating unit (G-X-Y) are hydroxylated in some or all of the chains.

It is found in the secreted. The protein localises to the extracellular space. The protein resides in the extracellular matrix. Its subcellular location is the basement membrane. Macromolecular component of the subendothelium. Major component of the Descemet's membrane (basement membrane) of corneal endothelial cells. Also a component of the endothelia of blood vessels. Necessary for migration and proliferation of vascular smooth muscle cells and thus, has a potential role in the maintenance of vessel wall integrity and structure, in particular in atherogenesis. The protein is Collagen alpha-1(VIII) chain (COL8A1) of Gallus gallus (Chicken).